The chain runs to 482 residues: DNA polymerase II small subunit (482 aa).

The protein belongs to the DNA polymerase delta/II small subunit family. As to quaternary structure, heterodimer of a large subunit and a small subunit.

The catalysed reaction is DNA(n) + a 2'-deoxyribonucleoside 5'-triphosphate = DNA(n+1) + diphosphate. It catalyses the reaction Exonucleolytic cleavage in the 3'- to 5'-direction to yield nucleoside 5'-phosphates.. In terms of biological role, possesses two activities: a DNA synthesis (polymerase) and an exonucleolytic activity that degrades single-stranded DNA in the 3' to 5' direction. Has a template-primer preference which is characteristic of a replicative DNA polymerase. The chain is DNA polymerase II small subunit (polB) from Methanothermobacter thermautotrophicus (strain ATCC 29096 / DSM 1053 / JCM 10044 / NBRC 100330 / Delta H) (Methanobacterium thermoautotrophicum).